The primary structure comprises 148 residues: uncharacterized protein (148 aa).

Residues 8 to 148 (QVMQEPELKI…DGFLTLILRN (141 aa)) enclose the N-acetyltransferase domain.

Belongs to the acetyltransferase family.

This is an uncharacterized protein from Bacillus subtilis (strain 168).